Consider the following 104-residue polypeptide: N(4)-acetylcytidine amidohydrolase (104 aa).

Positions 7-93 (MTFFSRFEAD…EVIQEIYPGI (87 aa)) constitute an ASCH domain. The active-site Proton acceptor is the Lys22. Catalysis depends on Thr25, which acts as the Nucleophile. Residue Glu75 is the Proton donor of the active site.

The protein belongs to the N(4)-acetylcytidine amidohydrolase family.

It carries out the reaction N(4)-acetylcytidine + H2O = cytidine + acetate + H(+). The catalysed reaction is N(4)-acetyl-2'-deoxycytidine + H2O = 2'-deoxycytidine + acetate + H(+). It catalyses the reaction N(4)-acetylcytosine + H2O = cytosine + acetate + H(+). In terms of biological role, catalyzes the hydrolysis of N(4)-acetylcytidine (ac4C). In Vibrio vulnificus (strain CMCP6), this protein is N(4)-acetylcytidine amidohydrolase.